We begin with the raw amino-acid sequence, 214 residues long: Putative nickel/cobalt efflux system MJ1092 (214 aa).

6 consecutive transmembrane segments (helical) span residues 2-22 (VMIM…LHAL), 46-66 (ILLG…LGIL), 79-99 (VHDM…IWII), 116-136 (VITL…AVLL), 149-169 (IYVA…AVAF), and 188-208 (LPLI…AHPI).

Belongs to the NiCoT transporter (TC 2.A.52) family.

The protein resides in the cell membrane. Efflux system for nickel and cobalt. The protein is Putative nickel/cobalt efflux system MJ1092 of Methanocaldococcus jannaschii (strain ATCC 43067 / DSM 2661 / JAL-1 / JCM 10045 / NBRC 100440) (Methanococcus jannaschii).